A 757-amino-acid chain; its full sequence is Polyribonucleotide nucleotidyltransferase (757 aa).

2 residues coordinate Mg(2+): Asp-532 and Asp-538. The KH domain occupies 598-657; the sequence is PRVTAIKVPVDKIGEVIGPKGKMINSITEQTGANISIEDDGTVFVGATDGPSAQAAIDMI. Residues 669 to 738 enclose the S1 motif domain; the sequence is GERFLGTVVK…NRGKISLIPV (70 aa).

It belongs to the polyribonucleotide nucleotidyltransferase family. It depends on Mg(2+) as a cofactor.

Its subcellular location is the cytoplasm. It carries out the reaction RNA(n+1) + phosphate = RNA(n) + a ribonucleoside 5'-diphosphate. Its function is as follows. Involved in mRNA degradation. Catalyzes the phosphorolysis of single-stranded polyribonucleotides processively in the 3'- to 5'-direction. The polypeptide is Polyribonucleotide nucleotidyltransferase (Rhodococcus jostii (strain RHA1)).